Consider the following 114-residue polypeptide: MAVNLYDHANQLEQALRESDEYQAIQNAYAKVKENQESKDLFDEFRETQLSFQQKQMQGEEIGEEELQKAQEQAQKIENDSNISELMAAEQNMSQVFQEINQIIVKPLDEIYAD.

Belongs to the UPF0342 family.

In Staphylococcus saprophyticus subsp. saprophyticus (strain ATCC 15305 / DSM 20229 / NCIMB 8711 / NCTC 7292 / S-41), this protein is UPF0342 protein SSP0954.